The sequence spans 329 residues: DNA-directed RNA polymerase subunit alpha (329 aa).

The interval 1 to 231 (MQNSLLKPKA…EQLAVFAQLE (231 aa)) is alpha N-terminal domain (alpha-NTD). An alpha C-terminal domain (alpha-CTD) region spans residues 249–329 (FDPILLRPVD…SWPPAALEKR (81 aa)).

Belongs to the RNA polymerase alpha chain family. As to quaternary structure, homodimer. The RNAP catalytic core consists of 2 alpha, 1 beta, 1 beta' and 1 omega subunit. When a sigma factor is associated with the core the holoenzyme is formed, which can initiate transcription.

It catalyses the reaction RNA(n) + a ribonucleoside 5'-triphosphate = RNA(n+1) + diphosphate. Functionally, DNA-dependent RNA polymerase catalyzes the transcription of DNA into RNA using the four ribonucleoside triphosphates as substrates. This chain is DNA-directed RNA polymerase subunit alpha, found in Albidiferax ferrireducens (strain ATCC BAA-621 / DSM 15236 / T118) (Rhodoferax ferrireducens).